Here is a 243-residue protein sequence, read N- to C-terminus: Auxin-induced protein AUX28 (243 aa).

An EAR-like (transcriptional repression) motif is present at residues 8 to 12 (LRLGL). The segment at 54–91 (AATTAAAAADPTDKHKTLPKEKTLLPADPAKPPAKTQV) is disordered. Basic and acidic residues predominate over residues 64 to 76 (PTDKHKTLPKEKT). A compositionally biased stretch (low complexity) spans 77 to 89 (LLPADPAKPPAKT). Positions 123–223 (ASFVKVSMDG…SCKRLRIMKG (101 aa)) constitute a PB1 domain.

Belongs to the Aux/IAA family. As to quaternary structure, homodimers and heterodimers.

It is found in the nucleus. Functionally, aux/IAA proteins are short-lived transcriptional factors that function as repressors of early auxin response genes at low auxin concentrations. Repression is thought to result from the interaction with auxin response factors (ARFs), proteins that bind to the auxin-responsive promoter element (AuxRE). Formation of heterodimers with ARF proteins may alter their ability to modulate early auxin response genes expression. The chain is Auxin-induced protein AUX28 (AUX28) from Glycine max (Soybean).